Reading from the N-terminus, the 231-residue chain is Uracil-DNA glycosylase (231 aa).

Residue D71 is the Proton acceptor of the active site.

Belongs to the uracil-DNA glycosylase (UDG) superfamily. UNG family.

It is found in the cytoplasm. It catalyses the reaction Hydrolyzes single-stranded DNA or mismatched double-stranded DNA and polynucleotides, releasing free uracil.. In terms of biological role, excises uracil residues from the DNA which can arise as a result of misincorporation of dUMP residues by DNA polymerase or due to deamination of cytosine. This is Uracil-DNA glycosylase from Pseudomonas aeruginosa (strain UCBPP-PA14).